A 105-amino-acid polypeptide reads, in one-letter code: MVNVPKTKKTYCKSKECRKHTLHKVTQYKKGKDSLAAQGKRRYDRKQSGYGGQTKPVFHKKAKTTKKIVLRLQCQGCKHVSQHPIKRCKHFEIGGDKKGKGTSLF.

The segment at Tyr28 to Val57 is disordered.

The protein belongs to the eukaryotic ribosomal protein eL42 family.

The chain is Large ribosomal subunit protein eL42 (RPL44) from Gossypium hirsutum (Upland cotton).